The sequence spans 349 residues: MVKLFCSIVGVAGSPFSVEVNEGKTVDDLKKAIKAENLDDPTLRNVAPKNLQLFLAKKGDAWLRYNEDLDTYLQSEIDTSSYLHMRASWKLSKPTLFGPDVSLGEDVVHVLVVVPGQRLPIAATAIHEPHPARKKRWEELNKILDRNQRAKVNAAGESSTGYSYVSFSDVDRVMRARRYEQPRKVIENEKIDVLYEYLLLLTKAFGEIVNGKEAKRLYFIVPVLVCVCGLFDGEVRILAEETVTGKRVHGDGAFEFVIERGSKRVCIVKAKRDDFQQGLAQAYVGSEVLADLEGLTDLFSIVTNFKEWYFSRCLNDRVERDDATMDMEHDIPTREAVKKIAEKIYSMLS.

Positions 1–17 (MVKLFCSIVGVAGSPFS) are cleaved as a signal peptide. Residues 18 to 57 (VEVNEGKTVDDLKKAIKAENLDDPTLRNVAPKNLQLFLAK) are LQLFLAK domain. The DWL domain stretch occupies residues 58 to 108 (KGDAWLRYNEDLDTYLQSEIDTSSYLHMRASWKLSKPTLFGPDVSLGEDVV). The HVLVXXP motif signature appears at 109–115 (HVLVVVP).

This sequence belongs to the Crinkler effector family.

The protein resides in the secreted. It is found in the host nucleus. Its function is as follows. Secreted effector that elicits necrosis in host plants, a characteristic of plant innate immunity. This chain is Crinkler effector protein 5, found in Phytophthora infestans (Potato late blight agent).